The sequence spans 950 residues: Defective chorion protein, FC106 isoform (950 aa).

An N-terminal signal peptide occupies residues 1-19 (MRLFSLLPLLALLVVQAAG). Disordered stretches follow at residues 23-60 (VTSD…PSIN), 184-212 (APAP…PDAP), and 268-294 (PAQP…EDPY). Residues 32–41 (AGSTTNSTTD) are compositionally biased toward polar residues. The segment covering 268–280 (PAQPAAAGTDAQA) has biased composition (low complexity). Tandem repeats lie at residues 493-518 (QNPM…QQIQ), 519-544 (QNPM…QQIQ), 545-570 (QNPM…QQIQ), 571-596 (QNPM…QQIQ), and 597-622 (QNPM…QQIQ). The 12 X 26 AA approximate tandem repeats, Glu, Met-rich stretch occupies residues 493-788 (QNPMMMQQRQ…IQQQQRQMMQ (296 aa)). The 6; approximate repeat unit spans residues 623-652 (QNPMMMQQRQWSEEQAKIQHDQQMAQQMAQ). The stretch at 653-680 (QGLMMTEQRQRQWSEDQAKIQQAQQMAQ) is one 7; approximate repeat. One copy of the 8; approximate repeat lies at 681-696 (QTPMMMPQMQQRQWTE). One copy of the 9; approximate repeat lies at 697 to 720 (DPQMVQQMQQRQWAEDQTRMQMAQ). The 10; approximate repeat unit spans residues 721 to 733 (QNPMMQQQRQMAE). One copy of the 11; approximate repeat lies at 734 to 758 (NPQMMQQRQWSEEQTKIEQAQQMAQ). The 12; approximate repeat unit spans residues 759–788 (QNQMMMQQMQQRQWSEDQAQIQQQQRQMMQ). The segment at 843 to 875 (GPQMPENEGTARHKVDALGVGGNKRKKSKSKSA) is disordered.

Post-translationally, proteolytic cleavage of isoform FC106 generates 2 further products, S80 and S60.

Its subcellular location is the secreted. Its function is as follows. Required for proper assembly of the eggshell. The chain is Defective chorion protein, FC106 isoform from Drosophila melanogaster (Fruit fly).